The following is a 320-amino-acid chain: Cytochrome f (320 aa).

A signal peptide spans 1–35 (MQTRNAFSWLKKQITRSISVSLMIYILTRTSISSA). 4 residues coordinate heme: Tyr36, Cys56, Cys59, and His60. Residues 286–305 (VQGLLFFLASVILAQIFLVL) traverse the membrane as a helical segment.

Belongs to the cytochrome f family. The 4 large subunits of the cytochrome b6-f complex are cytochrome b6, subunit IV (17 kDa polypeptide, petD), cytochrome f and the Rieske protein, while the 4 small subunits are PetG, PetL, PetM and PetN. The complex functions as a dimer. Heme serves as cofactor.

Its subcellular location is the plastid. It localises to the chloroplast thylakoid membrane. Component of the cytochrome b6-f complex, which mediates electron transfer between photosystem II (PSII) and photosystem I (PSI), cyclic electron flow around PSI, and state transitions. The polypeptide is Cytochrome f (Atropa belladonna (Belladonna)).